The following is a 143-amino-acid chain: Transcriptional regulator SlyA (143 aa).

Residues 2–135 (ESTLGSDLAR…LSGLIDKLEK (134 aa)) enclose the HTH marR-type domain. The H-T-H motif DNA-binding region spans 49-72 (QIQLAKAIGIEQPSLVRTLDQLEE).

Belongs to the SlyA family. Homodimer.

Functionally, transcription regulator that can specifically activate or repress expression of target genes. This is Transcriptional regulator SlyA from Yersinia pestis (strain Pestoides F).